A 156-amino-acid chain; its full sequence is Ribosome maturation factor RimP (156 aa).

The protein belongs to the RimP family.

The protein resides in the cytoplasm. In terms of biological role, required for maturation of 30S ribosomal subunits. In Bacillus subtilis (strain 168), this protein is Ribosome maturation factor RimP.